We begin with the raw amino-acid sequence, 292 residues long: NAD kinase (292 aa).

Aspartate 73 (proton acceptor) is an active-site residue. Residues 73–74 (DG), 147–148 (NE), histidine 158, arginine 175, aspartate 177, 188–193 (TGYSLS), and glutamine 248 each bind NAD(+).

The protein belongs to the NAD kinase family. A divalent metal cation serves as cofactor.

The protein localises to the cytoplasm. The catalysed reaction is NAD(+) + ATP = ADP + NADP(+) + H(+). Its function is as follows. Involved in the regulation of the intracellular balance of NAD and NADP, and is a key enzyme in the biosynthesis of NADP. Catalyzes specifically the phosphorylation on 2'-hydroxyl of the adenosine moiety of NAD to yield NADP. The protein is NAD kinase of Buchnera aphidicola subsp. Baizongia pistaciae (strain Bp).